Consider the following 428-residue polypeptide: MLEILADESVGGNSPTVIINRGAKKMQWPFIGCGGLGFSKTAHFTCFDSMTQLCEEDIPCIHLPPQHRSVYKMSTENKMRAVVFHSPYKVAVEERPIPKIQDSGDIVVKVTYTALCGSDLHTFRGIEPAGTGFVMGHEVTGEVVEVGSGVKSIQKGDMVVSAFTTSCGECFYCKQGFSSRCEKSVLFGCDHLDGAQAEYVRIPNADGTVMKAPEGVEEKYLVLMADIFPTGYFAASNAFKGYTPEQISEQTVVLIGCGPVGLCALINALEFKPKHLLAVDSIPSRLELARSLGAEPWNFQQDREGLDKRVKELTNGRGADAVIEVVGLSPALRTGFDLLRPWGTISSVGVHNGEIPWAGNDAYDKNLRIQMGRCPVRSVSPQALDVLKKNQHKLGFMADKIMPLSQAVEGYELFNAMKVQKVIFKAGE.

6 residues coordinate Zn(2+): cysteine 116, histidine 137, cysteine 167, cysteine 170, cysteine 173, and cysteine 181. Residue lysine 393 is modified to N6-benzoyllysine.

The protein belongs to the zinc-containing alcohol dehydrogenase family. Class-III subfamily. In terms of assembly, homodimer. Zn(2+) is required as a cofactor. Benzoylation at lys-393 by gcnE leads to the activation od adhB.

It catalyses the reaction a primary alcohol + NAD(+) = an aldehyde + NADH + H(+). The enzyme catalyses a secondary alcohol + NAD(+) = a ketone + NADH + H(+). Functionally, zinc-type alcohol dehydrogenase involved in development, secondary metabolism, pathogenicity, and stress response. Specifically controls the formation of sclerotia and the biosynthesis of aflatoxin. Contribute to seed colonization of A flavus on host maize seed. This is Zinc-type alcohol dehydrogenase B from Aspergillus flavus (strain ATCC 200026 / FGSC A1120 / IAM 13836 / NRRL 3357 / JCM 12722 / SRRC 167).